The following is a 364-amino-acid chain: uncharacterized protein (364 aa).

3 consecutive transmembrane segments (helical) span residues 41 to 61 (NIFT…FFGL), 298 to 318 (VIYI…ITYM), and 329 to 349 (LLFY…SIII).

Its subcellular location is the membrane. This is an uncharacterized protein from Mycoplasma capricolum subsp. capricolum (strain California kid / ATCC 27343 / NCTC 10154).